Consider the following 166-residue polypeptide: uncharacterized protein (166 aa).

This is an uncharacterized protein from Xestia (XnGV).